The primary structure comprises 494 residues: Protein DETOXIFICATION 22 (494 aa).

12 helical membrane passes run 40–60 (LWVV…VSLV), 78–98 (ITFT…ASAL), 123–143 (IVLT…GPIL), 159–179 (IALW…CQIF), 188–208 (IIAY…WLLV), 217–237 (GAMT…LLYV), 268–288 (GGMV…TGNL), 299–319 (AICI…LAAV), 340–360 (IVAV…FLFL), 384–404 (LLAF…VAVG), 416–436 (LACY…VVGL), and 441–461 (VWIG…IMTL).

It belongs to the multi antimicrobial extrusion (MATE) (TC 2.A.66.1) family.

Its subcellular location is the membrane. This chain is Protein DETOXIFICATION 22, found in Arabidopsis thaliana (Mouse-ear cress).